Reading from the N-terminus, the 251-residue chain is Probable transcriptional regulatory protein CC_3243 (251 aa).

The protein belongs to the TACO1 family.

The protein localises to the cytoplasm. The protein is Probable transcriptional regulatory protein CC_3243 of Caulobacter vibrioides (strain ATCC 19089 / CIP 103742 / CB 15) (Caulobacter crescentus).